Reading from the N-terminus, the 1007-residue chain is Kinesin-like protein KIN-14F (1007 aa).

The 147-residue stretch at 41–187 folds into the Calponin-homology (CH) domain; the sequence is AARRNEAAGW…CVLALKSYGD (147 aa). The Kinesin motor domain occupies 390-715; sequence SIRVYCRVRP…LKFAERVSTV (326 aa). Residue 472–479 coordinates ATP; sequence GQTGSGKT. A coiled-coil region spans residues 718–748; it reads GAARLNKESGEVKELKEQIARLKSSLAMKDS. Over residues 885–904 the composition is skewed to basic and acidic residues; sequence KQYLRNNSRKKDGNEFEQQR. Disordered regions lie at residues 885–924 and 944–1007; these read KQYL…ATSD and SENG…AGTK. A compositionally biased stretch (polar residues) spans 963–1001; it reads TRTPLHSQIPSASRKTSNGNRSGRQPLSGSDSRRLSSNG.

Belongs to the TRAFAC class myosin-kinesin ATPase superfamily. Kinesin family. KIN-14 subfamily.

The polypeptide is Kinesin-like protein KIN-14F (Oryza sativa subsp. japonica (Rice)).